We begin with the raw amino-acid sequence, 151 residues long: 3-hydroxyacyl-[acyl-carrier-protein] dehydratase FabZ (151 aa).

The active site involves H56.

The protein belongs to the thioester dehydratase family. FabZ subfamily.

It localises to the cytoplasm. It catalyses the reaction a (3R)-hydroxyacyl-[ACP] = a (2E)-enoyl-[ACP] + H2O. Its function is as follows. Involved in unsaturated fatty acids biosynthesis. Catalyzes the dehydration of short chain beta-hydroxyacyl-ACPs and long chain saturated and unsaturated beta-hydroxyacyl-ACPs. The protein is 3-hydroxyacyl-[acyl-carrier-protein] dehydratase FabZ of Rhodopseudomonas palustris (strain HaA2).